We begin with the raw amino-acid sequence, 259 residues long: MAPNIYLVRQRISRLGQRMSGFQINLNPLKEPLGFIKVLEWIASIFAFATCGGFKGQTEIQVNCPPAVTENKTVTATFGYPFRLNEASFQPPPGVNICDVNWKDYVLIGDYSSSAQFYVTFAVFVFLYCIAALLLYVGYTSLYLDSRKLPMIDFVVTLVATFLWLVSTSAWAKALTDIKIATGHNIIDELPPCKKKAVLCYFGSVTSMGSLNVSVIFGFLNMILWGGNAWFVYKETSLHSPSNTSAPHSQGGIPPPTGI.

Topologically, residues 1 to 33 (MAPNIYLVRQRISRLGQRMSGFQINLNPLKEPL) are cytoplasmic. The MARVEL domain maps to 28–237 (PLKEPLGFIK…NAWFVYKETS (210 aa)). The chain crosses the membrane as a helical span at residues 34-54 (GFIKVLEWIASIFAFATCGGF). The Vesicular portion of the chain corresponds to 55–116 (KGQTEIQVNC…LIGDYSSSAQ (62 aa)). N71 carries an N-linked (GlcNAc...) asparagine glycan. Residues 117–137 (FYVTFAVFVFLYCIAALLLYV) form a helical membrane-spanning segment. Residues 138 to 150 (GYTSLYLDSRKLP) lie on the Cytoplasmic side of the membrane. The chain crosses the membrane as a helical span at residues 151 to 171 (MIDFVVTLVATFLWLVSTSAW). Over 172–212 (AKALTDIKIATGHNIIDELPPCKKKAVLCYFGSVTSMGSLN) the chain is Vesicular. N212 carries N-linked (GlcNAc...) asparagine glycosylation. The chain crosses the membrane as a helical span at residues 213–233 (VSVIFGFLNMILWGGNAWFVY). Residues 234–259 (KETSLHSPSNTSAPHSQGGIPPPTGI) are Cytoplasmic-facing.

It belongs to the synaptophysin/synaptobrevin family.

It localises to the cytoplasmic vesicle membrane. The protein resides in the melanosome. This chain is Synaptophysin-like protein 1 (SYPL1), found in Homo sapiens (Human).